We begin with the raw amino-acid sequence, 255 residues long: Adenosylcobinamide-GDP ribazoletransferase (255 aa).

6 helical membrane passes run 43–63, 64–84, 113–133, 141–161, 195–215, and 234–254; these read LVGTLLGLLCVLVYAFASLFF, PYQVAIVLMMAFSLLLTGAFH, IGTYGSATLTMALIGKFVFLT, FGLMIVVAYTLSRAVAATLIY, LAAISLGLGVGLLLILFAILF, and CLGGAQQLMELGIYLVLIAVV.

It belongs to the CobS family. The cofactor is Mg(2+).

The protein resides in the cell inner membrane. The enzyme catalyses alpha-ribazole + adenosylcob(III)inamide-GDP = adenosylcob(III)alamin + GMP + H(+). The catalysed reaction is alpha-ribazole 5'-phosphate + adenosylcob(III)inamide-GDP = adenosylcob(III)alamin 5'-phosphate + GMP + H(+). It participates in cofactor biosynthesis; adenosylcobalamin biosynthesis; adenosylcobalamin from cob(II)yrinate a,c-diamide: step 7/7. Functionally, joins adenosylcobinamide-GDP and alpha-ribazole to generate adenosylcobalamin (Ado-cobalamin). Also synthesizes adenosylcobalamin 5'-phosphate from adenosylcobinamide-GDP and alpha-ribazole 5'-phosphate. This chain is Adenosylcobinamide-GDP ribazoletransferase, found in Vibrio vulnificus (strain CMCP6).